The sequence spans 275 residues: MSSTPSNQNIIPIIKKESIVSLFEKGIRQDGRKLTDYRPLSITLDYAKKADGSALVKLGTTMVLAGTKLEIDKPYEDTPNQGNLIVNVELLPLAYETFEPGPPDENAIELARVVDRSLRDSKALDLTKLVIEPGKSVWTVWLDVYVLDYGGNVLDACTLASVAALYNTKVYKVEQHSNGISVNKNEVVGKLPLNYPVVTISVAKVDKYLVVDPDLDEESIMDAKISFSYTPDLKIVGIQKSGKGSMSLQDIDQAENTARSTAVKLLEELKKHLGI.

It belongs to the RNase PH family. Rrp42 subfamily. Component of the archaeal exosome complex. Forms a hexameric ring-like arrangement composed of 3 Rrp41-Rrp42 heterodimers. The hexameric ring associates with a trimer of Rrp4 and/or Csl4 subunits.

The protein localises to the cytoplasm. Its function is as follows. Non-catalytic component of the exosome, which is a complex involved in RNA degradation. Contributes to the structuring of the Rrp41 active site. The chain is Exosome complex component Rrp42 from Saccharolobus solfataricus (strain ATCC 35092 / DSM 1617 / JCM 11322 / P2) (Sulfolobus solfataricus).